The chain runs to 370 residues: Anhydro-N-acetylmuramic acid kinase (370 aa).

ATP is bound at residue 12 to 19 (GTSLDGVD).

The protein belongs to the anhydro-N-acetylmuramic acid kinase family.

The enzyme catalyses 1,6-anhydro-N-acetyl-beta-muramate + ATP + H2O = N-acetyl-D-muramate 6-phosphate + ADP + H(+). Its pathway is amino-sugar metabolism; 1,6-anhydro-N-acetylmuramate degradation. It functions in the pathway cell wall biogenesis; peptidoglycan recycling. In terms of biological role, catalyzes the specific phosphorylation of 1,6-anhydro-N-acetylmuramic acid (anhMurNAc) with the simultaneous cleavage of the 1,6-anhydro ring, generating MurNAc-6-P. Is required for the utilization of anhMurNAc either imported from the medium or derived from its own cell wall murein, and thus plays a role in cell wall recycling. The polypeptide is Anhydro-N-acetylmuramic acid kinase (Pectobacterium carotovorum subsp. carotovorum (strain PC1)).